Consider the following 68-residue polypeptide: DNA gyrase inhibitor YacG (68 aa).

Positions 10, 13, 29, and 33 each coordinate Zn(2+).

It belongs to the DNA gyrase inhibitor YacG family. As to quaternary structure, interacts with GyrB. Zn(2+) is required as a cofactor.

Inhibits all the catalytic activities of DNA gyrase by preventing its interaction with DNA. Acts by binding directly to the C-terminal domain of GyrB, which probably disrupts DNA binding by the gyrase. This Haemophilus influenzae (strain PittGG) protein is DNA gyrase inhibitor YacG.